Reading from the N-terminus, the 22-residue chain is Probable ATP-dependent Clp protease proteolytic subunit (22 aa).

The protein belongs to the peptidase S14 family. As to quaternary structure, component of the chloroplastic Clp protease core complex.

It carries out the reaction Hydrolysis of proteins to small peptides in the presence of ATP and magnesium. alpha-casein is the usual test substrate. In the absence of ATP, only oligopeptides shorter than five residues are hydrolyzed (such as succinyl-Leu-Tyr-|-NHMec, and Leu-Tyr-Leu-|-Tyr-Trp, in which cleavage of the -Tyr-|-Leu- and -Tyr-|-Trp bonds also occurs).. Cleaves peptides in various proteins in a process that requires ATP hydrolysis. Has a chymotrypsin-like activity. Plays a major role in the degradation of misfolded proteins. This Populus euphratica (Euphrates poplar) protein is Probable ATP-dependent Clp protease proteolytic subunit.